The primary structure comprises 446 residues: Ribosomal protein uS12 methylthiotransferase RimO (446 aa).

Residues 6–116 enclose the MTTase N-terminal domain; it reads PNIGFISLGC…VMQQVHKYVP (111 aa). Residues Cys-15, Cys-51, Cys-80, Cys-148, Cys-152, and Cys-155 each coordinate [4Fe-4S] cluster. A Radical SAM core domain is found at 134 to 375; that stretch reads LTPKHYAYLK…MQLQQEISAA (242 aa). A TRAM domain is found at 378–446; the sequence is QQKVGKVFTV…AYDLYASLIN (69 aa).

The protein belongs to the methylthiotransferase family. RimO subfamily. [4Fe-4S] cluster is required as a cofactor.

It is found in the cytoplasm. The enzyme catalyses L-aspartate(89)-[ribosomal protein uS12]-hydrogen + (sulfur carrier)-SH + AH2 + 2 S-adenosyl-L-methionine = 3-methylsulfanyl-L-aspartate(89)-[ribosomal protein uS12]-hydrogen + (sulfur carrier)-H + 5'-deoxyadenosine + L-methionine + A + S-adenosyl-L-homocysteine + 2 H(+). Catalyzes the methylthiolation of an aspartic acid residue of ribosomal protein uS12. This Pasteurella multocida (strain Pm70) protein is Ribosomal protein uS12 methylthiotransferase RimO.